Reading from the N-terminus, the 173-residue chain is uncharacterized protein (173 aa).

Positions 1–15 are cleaved as a propeptide — leader sequence; it reads MERKLSQRAGNTFKG. Phe16 carries the post-translational modification N-methylphenylalanine. A helical transmembrane segment spans residues 16-37; the sequence is FTLVEVLITLAIISLVFSLILI.

It is found in the membrane. This is an uncharacterized protein from Aquifex aeolicus (strain VF5).